A 1633-amino-acid polypeptide reads, in one-letter code: Serine-aspartate repeat-containing protein F (1633 aa).

An N-terminal signal peptide occupies residues 1–45 (MKKRRQGPINKRVDFLSNKVNKYSIRKFTVGTASILVGATLMFGA). The interval 46 to 678 (ADNEAKAAED…GSSTAQGDNP (633 aa)) is ligand binding A region. Residues 51–269 (KAAEDNQLES…SISTDSSVND (219 aa)) form a disordered region. Positions 61 to 74 (ASKEEQKGSRDNES) are enriched in basic and acidic residues. Polar residues-rich tracts occupy residues 85 to 99 (GSHS…NNAT) and 146 to 168 (PKTS…DNLN). Basic and acidic residues predominate over residues 175–184 (KESKTDEHST). Positions 186-226 (QAQMSTNKSNLDTNDSPTQSEKTSSQANNDSTDNQSAPSKQ) are enriched in polar residues. Residues 227–253 (LDSKPSEQKVYKTKFNDEPTQDVEHTT) are compositionally biased toward basic and acidic residues. A compositionally biased stretch (polar residues) spans 255–266 (KLKTPSISTDSS). 4 CNA-B domains span residues 679-797 (TYSL…YLTP), 798-907 (KYNV…FYKP), 908-1018 (IYNL…YKTP), and 1019-1129 (KYSV…FDDD). The segment at 679 to 1129 (TYSLGDYVWL…SIDNGYFDDD (451 aa)) is type I collagen binding region. The segment at 862 to 889 (FETPEGYTPTKQNSGSDEGKDSNGTKTT) is disordered. Residues 1085–1608 (KPEGMTQTTA…ANEDHDSKGT (524 aa)) form a disordered region. The span at 1107–1119 (EDVRVTITDHDDF) shows a compositional bias: basic and acidic residues. The span at 1125-1584 (YFDDDSDSDS…DSDSDSDSDS (460 aa)) shows a compositional bias: acidic residues. Residues 1585 to 1606 (DSDKNAKDKLPDTGANEDHDSK) show a composition bias toward basic and acidic residues. The LPXTG sorting signal motif lies at 1594–1598 (LPDTG). A Pentaglycyl murein peptidoglycan amidated threonine modification is found at T1597. Residues 1598–1633 (GANEDHDSKGTLLGTLFAGLGALLLGRRRKKDNKEK) constitute a propeptide, removed by sortase.

It belongs to the serine-aspartate repeat-containing protein (SDr) family.

The protein localises to the secreted. Its subcellular location is the cell wall. Its function is as follows. Binds to type I collagen via alpha-2(I) or alpha-1(I) chains. In Staphylococcus epidermidis (strain ATCC 12228 / FDA PCI 1200), this protein is Serine-aspartate repeat-containing protein F (sdrF).